The sequence spans 134 residues: MALQLGLFLIWAGVSVFLQLDPVNGDQDEGVSTEPTQDGPAELPEDEECVFPFVYRNRKHFDCTVHGSLFPWCSLDADYVGRWKYCAQRDYAKCVFPFIYGGKKYETCTKIGSMWMSWCSLSPNYDKDRAWKYC.

The N-terminal stretch at 1-25 (MALQLGLFLIWAGVSVFLQLDPVNG) is a signal peptide. O-linked (GalNAc...) threonine glycosylation is present at threonine 36. Fibronectin type-II domains are found at residues 44–88 (PEDE…YCAQ) and 89–134 (RDYA…WKYC). 4 disulfides stabilise this stretch: cysteine 49/cysteine 73, cysteine 63/cysteine 86, cysteine 94/cysteine 119, and cysteine 108/cysteine 134.

It belongs to the seminal plasma protein family. As to quaternary structure, homodimer. In terms of processing, O-linked glycan consists of Gal-GalNAc disaccharide which is modified with a sialic acid residue (macro- and/or microheterogeneity account for differences between BSP-A1 and BSP-A2). Major component of seminal plasma.

The protein localises to the secreted. Its function is as follows. Could enhance the fertilizing capacity of bull spermatozoa upon interaction with heparin-like glycosaminoglycans present in the female genital tract. Exhibits both simulatory and inhibitory actions on the release of pituitary gonadotropins. In Bos taurus (Bovine), this protein is Seminal plasma protein PDC-109.